The sequence spans 316 residues: HPr kinase/phosphorylase (316 aa).

Catalysis depends on residues His-141 and Lys-162. 156 to 163 is a binding site for ATP; sequence GESGVGKS. Ser-163 is a binding site for Mg(2+). Asp-180 functions as the Proton acceptor; for phosphorylation activity. Proton donor; for dephosphorylation activity in the catalytic mechanism. Residues 204–213 form an important for the catalytic mechanism of both phosphorylation and dephosphorylation region; sequence MEIRGIGIID. Glu-205 provides a ligand contact to Mg(2+). The active site involves Arg-246. The tract at residues 267–272 is important for the catalytic mechanism of dephosphorylation; it reads PVKVGR.

Belongs to the HPrK/P family. As to quaternary structure, homohexamer. The cofactor is Mg(2+).

It catalyses the reaction [HPr protein]-L-serine + ATP = [HPr protein]-O-phospho-L-serine + ADP + H(+). It carries out the reaction [HPr protein]-O-phospho-L-serine + phosphate + H(+) = [HPr protein]-L-serine + diphosphate. Functionally, catalyzes the ATP- as well as the pyrophosphate-dependent phosphorylation of a specific serine residue in HPr, a phosphocarrier protein of the phosphoenolpyruvate-dependent sugar phosphotransferase system (PTS). HprK/P also catalyzes the pyrophosphate-producing, inorganic phosphate-dependent dephosphorylation (phosphorolysis) of seryl-phosphorylated HPr (P-Ser-HPr). The two antagonistic activities of HprK/P are regulated by several intracellular metabolites, which change their concentration in response to the absence or presence of rapidly metabolisable carbon sources (glucose, fructose, etc.) in the growth medium. Therefore, by controlling the phosphorylation state of HPr, HPrK/P is a sensor enzyme that plays a major role in the regulation of carbon metabolism and sugar transport: it mediates carbon catabolite repression (CCR), and regulates PTS-catalyzed carbohydrate uptake and inducer exclusion. The sequence is that of HPr kinase/phosphorylase from Lactobacillus delbrueckii subsp. bulgaricus (strain ATCC 11842 / DSM 20081 / BCRC 10696 / JCM 1002 / NBRC 13953 / NCIMB 11778 / NCTC 12712 / WDCM 00102 / Lb 14).